A 458-amino-acid polypeptide reads, in one-letter code: Transcription termination factor Rho (458 aa).

Residues 1-23 are disordered; that stretch reads MNTTNKESTAELNNTESNNNYNN. The segment covering 10-23 has biased composition (low complexity); that stretch reads AELNNTESNNNYNN. Positions 78–153 constitute a Rho RNA-BD domain; the sequence is LIVGEGVLEV…LKVNRVNFED (76 aa). ATP is bound by residues 201–206, 213–218, and Arg-244; these read GKGQRA and RTGKTV.

Belongs to the Rho family. In terms of assembly, homohexamer. The homohexamer assembles into an open ring structure.

Functionally, facilitates transcription termination by a mechanism that involves Rho binding to the nascent RNA, activation of Rho's RNA-dependent ATPase activity, and release of the mRNA from the DNA template. The protein is Transcription termination factor Rho of Rickettsia conorii (strain ATCC VR-613 / Malish 7).